The chain runs to 111 residues: Shuttling pre-60S factor C23B6.02c (111 aa).

Basic residues-rich tracts occupy residues 1 to 12 (MAKKQSIRSRNF) and 59 to 73 (SKKKKNKKQTSKKAK). 2 disordered regions span residues 1-25 (MAKKQSIRSRNFRRSDPAYDLDSST) and 47-111 (ALRS…QGDE). The segment covering 83–111 (QAREERLDTKISKSLQKQEKLKARKQGDE) has biased composition (basic and acidic residues).

It belongs to the ECM1 family. As to quaternary structure, associates with the pre-60S ribosomal particle and the nucleopore complex.

Its subcellular location is the nucleus. The protein localises to the nucleolus. It localises to the cytoplasm. In terms of biological role, pre-ribosomal factor involved in 60S ribosomal protein subunit export from the nucleus. The protein is Shuttling pre-60S factor C23B6.02c of Schizosaccharomyces pombe (strain 972 / ATCC 24843) (Fission yeast).